The chain runs to 492 residues: MADAPPTDEGWFVLHDCYTVDWDAWRDAPERDRTAALDDAASFLADREALADADEGESGVFSITGQKADLLFVHFRESLDELDRIQRAFEQTAFAEYTERAHSYVSVVEISGYTAPDYFEDPDSVDDGLRQYFESKLTPEIPDDTYVSFYPMSKRRQPEQNWYDLPIEERAEMMDVHGDLGKQYAGKVSQVIASSVGLDDMEWGVTLFADDLTDIKDIVYEMRFDEVSAKYGAFGDFFVGRRFPPADLPAFMAGERVPAPEGGADAHGEGERTHHHGDSDHHDGDDGEQHHHSTGDEADDGIRGELADEDIYAGQPHGEDVYATVLYSEAGADDLFEEVEGLRGNFEHYDTHVKTAVYDGHEADRRAVVSIWDTASAADTAAGFLADLPEVVERAGEESGFGTMGMFYETKPEHTAEFVEKFDTVAGVLADMDGHFDTDLMVNVENDDDMFIASQWRSQEDAMAFFRSDDFGDTVDWGRDVLADRPRHVFLA.

Heme is bound at residue H177. Positions 253-301 (AGERVPAPEGGADAHGEGERTHHHGDSDHHDGDDGEQHHHSTGDEADDG) are disordered. Over residues 264–301 (ADAHGEGERTHHHGDSDHHDGDDGEQHHHSTGDEADDG) the composition is skewed to basic and acidic residues. The ABM domain occupies 402–490 (GTMGMFYETK…VLADRPRHVF (89 aa)).

In the N-terminal section; belongs to the ChdC family.

The sequence is that of Putative heme-binding protein VNG_2021C from Halobacterium salinarum (strain ATCC 700922 / JCM 11081 / NRC-1) (Halobacterium halobium).